A 429-amino-acid polypeptide reads, in one-letter code: Glutamate-1-semialdehyde 2,1-aminomutase 2 (429 aa).

Lys-268 is modified (N6-(pyridoxal phosphate)lysine).

The protein belongs to the class-III pyridoxal-phosphate-dependent aminotransferase family. HemL subfamily. In terms of assembly, homodimer. The cofactor is pyridoxal 5'-phosphate.

The protein localises to the cytoplasm. The enzyme catalyses (S)-4-amino-5-oxopentanoate = 5-aminolevulinate. The protein operates within porphyrin-containing compound metabolism; protoporphyrin-IX biosynthesis; 5-aminolevulinate from L-glutamyl-tRNA(Glu): step 2/2. The sequence is that of Glutamate-1-semialdehyde 2,1-aminomutase 2 from Halalkalibacterium halodurans (strain ATCC BAA-125 / DSM 18197 / FERM 7344 / JCM 9153 / C-125) (Bacillus halodurans).